A 406-amino-acid chain; its full sequence is Phosphatidylinositol 5-phosphate 4-kinase type-2 alpha (406 aa).

N-acetylalanine is present on Ala2. Position 3 is a phosphothreonine (Thr3). Ser14 is subject to Phosphoserine. A PIPK domain is found at 33–405 (ASDPLLSVLM…RFLDFIGHIL (373 aa)). Positions 59 to 65 (VMLMPDD) are required for interaction with PIP5K1A. An N6-acetyllysine mark is found at Lys89 and Lys145. A disordered region spans residues 287–328 (EQEEVECEENEGEEEGESDGAHPIGTPPDSPGNTLNSSPPLA). The segment covering 289–304 (EEVECEENEGEEEGES) has biased composition (acidic residues).

Homodimer. Interacts with PIP4K2B; the interaction may regulate localization to the nucleus. Probably interacts with PIP5K1A; the interaction inhibits PIP5K1A kinase activity. Phosphorylated in tyrosines. Phosphorylation is induced by light and increases kinase activity.

It is found in the cell membrane. The protein resides in the nucleus. Its subcellular location is the lysosome. The protein localises to the cytoplasm. It localises to the photoreceptor inner segment. It is found in the cell projection. The protein resides in the cilium. Its subcellular location is the photoreceptor outer segment. It catalyses the reaction a 1,2-diacyl-sn-glycero-3-phospho-(1D-myo-inositol-5-phosphate) + ATP = a 1,2-diacyl-sn-glycero-3-phospho-(1D-myo-inositol-4,5-bisphosphate) + ADP + H(+). The catalysed reaction is 1,2-dihexadecanoyl-sn-glycero-3-phospho-(1D-myo-inositol-5-phosphate) + ATP = 1,2-dihexadecanoyl-sn-glycero-3-phospho-(1D-myo-inositol-4,5-bisphosphate) + ADP + H(+). It carries out the reaction 1,2-dihexadecanoyl-sn-glycero-3-phospho-(1D-myo-inositol-5-phosphate) + GTP = 1,2-dihexadecanoyl-sn-glycero-3-phospho-(1D-myo-inositol-4,5-bisphosphate) + GDP + H(+). Its activity is regulated as follows. In rod outer segments, activated by light. In terms of biological role, catalyzes the phosphorylation of phosphatidylinositol 5-phosphate (PtdIns5P) on the fourth hydroxyl of the myo-inositol ring, to form phosphatidylinositol 4,5-bisphosphate (PtdIns(4,5)P2). Has both ATP- and GTP-dependent kinase activities. May exert its function by regulating the levels of PtdIns5P, which functions in the cytosol by increasing AKT activity and in the nucleus signals through ING2. May regulate the pool of cytosolic PtdIns5P in response to the activation of tyrosine phosphorylation. Required for lysosome-peroxisome membrane contacts and intracellular cholesterol transport through modulating peroxisomal PtdIns(4,5)P2 level. In collaboration with PIP4K2B, has a role in mediating autophagy in times of nutrient stress. Required for autophagosome-lysosome fusion and the regulation of cellular lipid metabolism. Negatively regulates insulin signaling through a catalytic-independent mechanism. PIP4Ks interact with PIP5Ks and suppress PIP5K-mediated PtdIns(4,5)P2 synthesis and insulin-dependent conversion to PtdIns(3,4,5)P3. May be involved in thrombopoiesis, and the terminal maturation of megakaryocytes and regulation of their size. This chain is Phosphatidylinositol 5-phosphate 4-kinase type-2 alpha, found in Rattus norvegicus (Rat).